The primary structure comprises 705 residues: Effector protein AvrPphDPsv (705 aa).

Residues 1-15 (MNPLQSIQHNITTPP) show a composition bias toward polar residues. Disordered regions lie at residues 1 to 40 (MNPL…ISPS) and 175 to 205 (RLET…RRES).

The protein resides in the secreted. Effector protein involved in non-host recognition. The polypeptide is Effector protein AvrPphDPsv (avrPphDPsv) (Pseudomonas savastanoi (Pseudomonas syringae pv. savastanoi)).